We begin with the raw amino-acid sequence, 174 residues long: RNA pyrophosphohydrolase (174 aa).

The region spanning 6–149 (GYRPNVGIVI…KRDVYRRALK (144 aa)) is the Nudix hydrolase domain. The short motif at 38 to 59 (GGIDEGETPEQAMYRELYEEVG) is the Nudix box element.

The protein belongs to the Nudix hydrolase family. RppH subfamily. A divalent metal cation is required as a cofactor.

In terms of biological role, accelerates the degradation of transcripts by removing pyrophosphate from the 5'-end of triphosphorylated RNA, leading to a more labile monophosphorylated state that can stimulate subsequent ribonuclease cleavage. The protein is RNA pyrophosphohydrolase of Photobacterium profundum (strain SS9).